Consider the following 360-residue polypeptide: Phospho-N-acetylmuramoyl-pentapeptide-transferase (360 aa).

10 consecutive transmembrane segments (helical) span residues 21 to 41 (YLTL…LWLG), 73 to 93 (TMGG…WGDL), 94 to 114 (TNHY…IGWV), 145 to 165 (AVTL…VPLF), 168 to 188 (VVVP…VGSS), 199 to 219 (GLAI…AYAS), 236 to 256 (AGEL…FLWF), 263 to 283 (VFMG…VAVI), 288 to 308 (IVLF…MLQV), and 339 to 359 (IVRF…TLKI).

It belongs to the glycosyltransferase 4 family. MraY subfamily. Mg(2+) is required as a cofactor.

It localises to the cell inner membrane. The catalysed reaction is UDP-N-acetyl-alpha-D-muramoyl-L-alanyl-gamma-D-glutamyl-meso-2,6-diaminopimeloyl-D-alanyl-D-alanine + di-trans,octa-cis-undecaprenyl phosphate = di-trans,octa-cis-undecaprenyl diphospho-N-acetyl-alpha-D-muramoyl-L-alanyl-D-glutamyl-meso-2,6-diaminopimeloyl-D-alanyl-D-alanine + UMP. It participates in cell wall biogenesis; peptidoglycan biosynthesis. Catalyzes the initial step of the lipid cycle reactions in the biosynthesis of the cell wall peptidoglycan: transfers peptidoglycan precursor phospho-MurNAc-pentapeptide from UDP-MurNAc-pentapeptide onto the lipid carrier undecaprenyl phosphate, yielding undecaprenyl-pyrophosphoryl-MurNAc-pentapeptide, known as lipid I. This is Phospho-N-acetylmuramoyl-pentapeptide-transferase from Chromohalobacter salexigens (strain ATCC BAA-138 / DSM 3043 / CIP 106854 / NCIMB 13768 / 1H11).